A 455-amino-acid polypeptide reads, in one-letter code: Probable hexose phosphate transport protein (455 aa).

5 helical membrane passes run 34–54, 70–90, 113–133, 161–181, and 185–205; these read IFYSMFIGYIFYYFTRKSFTF, LGIIGSTLYFSYGISKFVSGV, IFFGMSSSIVLFALWWGLNGW, VWSTSHNIGGALIPILTGFII, and GWRGAMYVPGILCIGMGLVLI. Residues 219–242 form a disordered region; that stretch reads PIEKYKRDPHHAHHEGKSASEGTE. The next 6 membrane-spanning stretches (helical) occupy residues 257 to 277, 302 to 322, 331 to 351, 363 to 383, 394 to 414, and 424 to 444; these read YVLTNQWLWFLAAASFFIYIV, FCVSLFEIGGLFGMLVAGWLS, GPMNVLFSLGLLFAILGMWFS, LLFVIGFFLYGPQMMIGLAAA, ASGFTGWFAYFGATFAGYPLG, and GFFIALLACASIALLLFLPTW.

It belongs to the major facilitator superfamily. Organophosphate:Pi antiporter (OPA) (TC 2.A.1.4) family.

The protein localises to the cell membrane. Transport protein for sugar phosphate uptake. This chain is Probable hexose phosphate transport protein (uhpC), found in Chlamydia pneumoniae (Chlamydophila pneumoniae).